A 333-amino-acid chain; its full sequence is DNA-directed RNA polymerase subunit alpha (333 aa).

Residues methionine 1 to lysine 234 form an alpha N-terminal domain (alpha-NTD) region. Positions isoleucine 248–alanine 333 are alpha C-terminal domain (alpha-CTD).

Belongs to the RNA polymerase alpha chain family. Homodimer. The RNAP catalytic core consists of 2 alpha, 1 beta, 1 beta' and 1 omega subunit. When a sigma factor is associated with the core the holoenzyme is formed, which can initiate transcription.

It carries out the reaction RNA(n) + a ribonucleoside 5'-triphosphate = RNA(n+1) + diphosphate. DNA-dependent RNA polymerase catalyzes the transcription of DNA into RNA using the four ribonucleoside triphosphates as substrates. The chain is DNA-directed RNA polymerase subunit alpha from Pseudomonas entomophila (strain L48).